A 791-amino-acid polypeptide reads, in one-letter code: Sphingomyelin phosphodiesterase 4 (791 aa).

The chain crosses the membrane as a helical span at residues 755 to 775; sequence LFALLSFGLFSSTGLILIISF.

Mg(2+) is required as a cofactor.

Its subcellular location is the endoplasmic reticulum membrane. The protein resides in the golgi apparatus membrane. It is found in the nucleus envelope. The protein localises to the cell membrane. It localises to the sarcolemma. It catalyses the reaction a sphingomyelin + H2O = phosphocholine + an N-acylsphing-4-enine + H(+). In terms of biological role, catalyzes the hydrolysis of membrane sphingomyelin to form phosphorylcholine and ceramide. It has a relevant role in the homeostasis of membrane sphingolipids, thereby influencing membrane integrity, and endoplasmic reticulum organization and function. May sensitize cells to DNA damage-induced apoptosis. The chain is Sphingomyelin phosphodiesterase 4 (smpd4) from Danio rerio (Zebrafish).